The following is a 497-amino-acid chain: POU domain, class 3, transcription factor 3 (497 aa).

A compositionally biased stretch (gly residues) spans 31-51 (GGGGGGGGGGGGAGGGGGGMQ). 4 disordered regions span residues 31–62 (GGGGGGGGGGGGAGGGGGGMQPGSAAVTSGAY), 121–189 (WSGS…WGAA), 230–316 (NGML…TPTS), and 458–497 (EKRMTPPGIQQQTPDDVYSQVGTVSADTPPPHHGLQTSVQ). Composition is skewed to pro residues over residues 133 to 145 (QQPPRPPPPPPQG) and 170 to 180 (HLGPPPPPPHQ). Over residues 240 to 250 (GGGGGGAGGGA) the composition is skewed to gly residues. Residues 269–286 (HHHHHHHHAHPHPPHPHH) are compositionally biased toward basic residues. Residues 311–385 (EDTPTSDDLE…LLNKWLEEAD (75 aa)) enclose the POU-specific domain. The segment at residues 403-462 (KRKKRTSIEVSVKGALESHFLKCPKPSAQEITNLADSLQLEKEVVRVWFCNRRQKEKRMT) is a DNA-binding region (homeobox). Positions 465-483 (GIQQQTPDDVYSQVGTVSA) are enriched in polar residues.

It belongs to the POU transcription factor family. Class-3 subfamily. Homodimer. In terms of tissue distribution, brain.

Its subcellular location is the nucleus. Transcription factor that acts synergistically with SOX11 and SOX4. Plays a role in neuronal development. Is implicated in an enhancer activity at the embryonic met-mesencephalic junction; the enhancer element contains the octamer motif (5'-ATTTGCAT-3'). The protein is POU domain, class 3, transcription factor 3 (Pou3f3) of Rattus norvegicus (Rat).